We begin with the raw amino-acid sequence, 118 residues long: Large ribosomal subunit protein uL18 (118 aa).

The interval 1 to 24 (MISKPDKNKIRQKRHRRVRGKLSG) is disordered. The span at 10–20 (IRQKRHRRVRG) shows a compositional bias: basic residues.

Belongs to the universal ribosomal protein uL18 family. As to quaternary structure, part of the 50S ribosomal subunit; part of the 5S rRNA/L5/L18/L25 subcomplex. Contacts the 5S and 23S rRNAs.

Its function is as follows. This is one of the proteins that bind and probably mediate the attachment of the 5S RNA into the large ribosomal subunit, where it forms part of the central protuberance. The sequence is that of Large ribosomal subunit protein uL18 from Streptococcus mutans serotype c (strain ATCC 700610 / UA159).